A 229-amino-acid polypeptide reads, in one-letter code: Large ribosomal subunit protein uL1 (229 aa).

Belongs to the universal ribosomal protein uL1 family. As to quaternary structure, part of the 50S ribosomal subunit.

In terms of biological role, binds directly to 23S rRNA. The L1 stalk is quite mobile in the ribosome, and is involved in E site tRNA release. Protein L1 is also a translational repressor protein, it controls the translation of the L11 operon by binding to its mRNA. In Streptococcus thermophilus (strain CNRZ 1066), this protein is Large ribosomal subunit protein uL1.